Reading from the N-terminus, the 79-residue chain is RNA-binding protein Hfq (79 aa).

The Sm domain maps to Asp9 to Val69.

It belongs to the Hfq family. Homohexamer.

In terms of biological role, RNA chaperone that binds small regulatory RNA (sRNAs) and mRNAs to facilitate mRNA translational regulation in response to envelope stress, environmental stress and changes in metabolite concentrations. Also binds with high specificity to tRNAs. The polypeptide is RNA-binding protein Hfq (Brevibacillus brevis (strain 47 / JCM 6285 / NBRC 100599)).